The following is a 130-amino-acid chain: Small ribosomal subunit protein uS9 (130 aa).

Belongs to the universal ribosomal protein uS9 family.

The polypeptide is Small ribosomal subunit protein uS9 (Streptococcus mutans serotype c (strain ATCC 700610 / UA159)).